The following is a 115-amino-acid chain: Large ribosomal subunit protein bL19 (115 aa).

The protein belongs to the bacterial ribosomal protein bL19 family.

Functionally, this protein is located at the 30S-50S ribosomal subunit interface and may play a role in the structure and function of the aminoacyl-tRNA binding site. The chain is Large ribosomal subunit protein bL19 from Aeromonas hydrophila subsp. hydrophila (strain ATCC 7966 / DSM 30187 / BCRC 13018 / CCUG 14551 / JCM 1027 / KCTC 2358 / NCIMB 9240 / NCTC 8049).